A 120-amino-acid chain; its full sequence is Ribosome-binding factor A (120 aa).

It belongs to the RbfA family. In terms of assembly, monomer. Binds 30S ribosomal subunits, but not 50S ribosomal subunits or 70S ribosomes.

It is found in the cytoplasm. Its function is as follows. One of several proteins that assist in the late maturation steps of the functional core of the 30S ribosomal subunit. Associates with free 30S ribosomal subunits (but not with 30S subunits that are part of 70S ribosomes or polysomes). Required for efficient processing of 16S rRNA. May interact with the 5'-terminal helix region of 16S rRNA. The chain is Ribosome-binding factor A from Chlorobaculum tepidum (strain ATCC 49652 / DSM 12025 / NBRC 103806 / TLS) (Chlorobium tepidum).